A 429-amino-acid chain; its full sequence is Citrate synthase (429 aa).

Catalysis depends on residues His306 and Asp364.

The protein belongs to the citrate synthase family.

The enzyme catalyses oxaloacetate + acetyl-CoA + H2O = citrate + CoA + H(+). It functions in the pathway carbohydrate metabolism; tricarboxylic acid cycle; isocitrate from oxaloacetate: step 1/2. This is Citrate synthase (gltA) from Rhizobium meliloti (strain 1021) (Ensifer meliloti).